A 194-amino-acid chain; its full sequence is Peptidyl-tRNA hydrolase (194 aa).

Tyr-17 serves as a coordination point for tRNA. His-22 serves as the catalytic Proton acceptor. Positions 68, 70, and 116 each coordinate tRNA.

It belongs to the PTH family. Monomer.

The protein localises to the cytoplasm. The enzyme catalyses an N-acyl-L-alpha-aminoacyl-tRNA + H2O = an N-acyl-L-amino acid + a tRNA + H(+). Functionally, hydrolyzes ribosome-free peptidyl-tRNAs (with 1 or more amino acids incorporated), which drop off the ribosome during protein synthesis, or as a result of ribosome stalling. In terms of biological role, catalyzes the release of premature peptidyl moieties from peptidyl-tRNA molecules trapped in stalled 50S ribosomal subunits, and thus maintains levels of free tRNAs and 50S ribosomes. This chain is Peptidyl-tRNA hydrolase, found in Pseudomonas putida (strain ATCC 700007 / DSM 6899 / JCM 31910 / BCRC 17059 / LMG 24140 / F1).